Here is a 199-residue protein sequence, read N- to C-terminus: Recombination protein RecR (199 aa).

The C4-type zinc finger occupies 58-73 (CKTCGNIDTQSPCTVC). Residues 81-176 (AMIVVVADVA…KVTRLAHGVP (96 aa)) enclose the Toprim domain.

The protein belongs to the RecR family.

In terms of biological role, may play a role in DNA repair. It seems to be involved in an RecBC-independent recombinational process of DNA repair. It may act with RecF and RecO. The polypeptide is Recombination protein RecR (Bradyrhizobium sp. (strain BTAi1 / ATCC BAA-1182)).